The chain runs to 261 residues: NAD-capped RNA hydrolase NudC (261 aa).

Substrate is bound by residues K25 and R69. C98 and C101 together coordinate Zn(2+). E111 is a binding site for substrate. Residues C116 and C119 each coordinate Zn(2+). Residue Y124 participates in substrate binding. The 124-residue stretch at 125–248 (PQIAPCVIVA…TVARRLIEDT (124 aa)) folds into the Nudix hydrolase domain. A divalent metal cation contacts are provided by A158, E174, and E178. The short motif at 159-180 (GFVEVGETLEQAVSREVLEESN) is the Nudix box element. Residue 192–199 (QPWPFPHS) coordinates substrate. Residue E219 participates in a divalent metal cation binding. A241 contributes to the substrate binding site.

It belongs to the Nudix hydrolase family. NudC subfamily. As to quaternary structure, homodimer. It depends on Mg(2+) as a cofactor. Mn(2+) is required as a cofactor. The cofactor is Zn(2+).

The catalysed reaction is a 5'-end NAD(+)-phospho-ribonucleoside in mRNA + H2O = a 5'-end phospho-adenosine-phospho-ribonucleoside in mRNA + beta-nicotinamide D-ribonucleotide + 2 H(+). It catalyses the reaction NAD(+) + H2O = beta-nicotinamide D-ribonucleotide + AMP + 2 H(+). The enzyme catalyses NADH + H2O = reduced beta-nicotinamide D-ribonucleotide + AMP + 2 H(+). MRNA decapping enzyme that specifically removes the nicotinamide adenine dinucleotide (NAD) cap from a subset of mRNAs by hydrolyzing the diphosphate linkage to produce nicotinamide mononucleotide (NMN) and 5' monophosphate mRNA. The NAD-cap is present at the 5'-end of some mRNAs and stabilizes RNA against 5'-processing. Has preference for mRNAs with a 5'-end purine. Catalyzes the hydrolysis of a broad range of dinucleotide pyrophosphates. The sequence is that of NAD-capped RNA hydrolase NudC from Yersinia enterocolitica serotype O:8 / biotype 1B (strain NCTC 13174 / 8081).